The following is a 123-amino-acid chain: uncharacterized protein (123 aa).

The segment at 35 to 100 (SQDHGDDPAE…SSGAPASQHC (66 aa)) is disordered. Residues 37–48 (DHGDDPAERGRT) are compositionally biased toward basic and acidic residues. The segment covering 85–97 (ALPASPSSGAPAS) has biased composition (low complexity).

This is an uncharacterized protein from Homo sapiens (Human).